A 546-amino-acid chain; its full sequence is NRAMP-like transporter smf-2 (546 aa).

At 1–42 (MPGFQNANISDLAPPAREKTFDDTIAVKIPEDEKNTWFSWRK) the chain is on the cytoplasmic side. A helical membrane pass occupies residues 43–63 (LWAFTGPGFLMSIAYLDPGNI). Topologically, residues 64-70 (ESDLQAG) are extracellular. Residues 71–91 (AQAEYKLLWVLLVSHIVGMLL) traverse the membrane as a helical segment. Residues 92 to 119 (QRMSARLGVVSGKHMAEIAYDYYPLVPR) are Cytoplasmic-facing. Residues 120–140 (IILWLMIEIAIVCSDMQEVIG) traverse the membrane as a helical segment. Residues 141 to 152 (TAIAIYLLSSGK) are Extracellular-facing. Residues 153–173 (IPLLVGVLITILDTFTFLFID) traverse the membrane as a helical segment. Topologically, residues 174–181 (RYGIRKLE) are cytoplasmic. A helical transmembrane segment spans residues 182 to 202 (FIFVALISTMAISFGYEFVVM). At 203 to 228 (KPVLTKVLTGTVVPWCSGCGKEEIIT) the chain is on the extracellular side. Residues 229-249 (AISIFGAVIMPHNFYLHSALV) traverse the membrane as a helical segment. Residues 250–270 (KSRKVDRSSKTRIAEANKYFS) lie on the Cytoplasmic side of the membrane. The chain crosses the membrane as a helical span at residues 271-291 (IESAFALSVSFFINLFVLSVF). Residues 292-334 (ARGLYQKTNGDVNSMCLSHNDIPDSNVFPNNTSSVTVDLFQGG) lie on the Extracellular side of the membrane. N-linked (GlcNAc...) asparagine glycosylation is present at asparagine 321. A helical transmembrane segment spans residues 335 to 355 (IYLGCQFGLFAMIIWAIGIFA). At 356–386 (AGQSSTMTGTYTGQFVMEGFVRISWPKWKRV) the chain is on the cytoplasmic side. Residues 387–407 (LITRAVAITPTLILCIKAHGI) traverse the membrane as a helical segment. The Extracellular segment spans residues 408–415 (KNLTGMND). Residue asparagine 409 is glycosylated (N-linked (GlcNAc...) asparagine). A helical membrane pass occupies residues 416-436 (FLNCVQMVQLPFALIPMITFT). Over 437–453 (SSKRIMHNFRTSKPLQY) the chain is Cytoplasmic. The chain crosses the membrane as a helical span at residues 454–474 (FSIICGIITIGINVYFIFQYV). Residues 475 to 483 (TENFGTGWL) are Extracellular-facing. A helical membrane pass occupies residues 484–504 (IFVIIGPFTLLYIAFILYLAI). Residues 505–546 (YCLVACELMNDTVNLPGFDFHRTLELDAPWITETFVVNDVYF) are Cytoplasmic-facing.

This sequence belongs to the NRAMP family. In terms of tissue distribution, expressed in dopaminergic neurons (at protein level). Primarily expressed in mc1, mc2 and mc3 epithelial cells of the pharynx and vpil-6 pharyngeal-intestinal valve cells displaying an anterior-posterior expression gradient. Expressed in gonad sheath cells.

The protein resides in the apical cell membrane. It is found in the cytoplasmic vesicle membrane. Probable divalent metal ion transporter which regulates Mn(2+) uptake. This is NRAMP-like transporter smf-2 from Caenorhabditis elegans.